The primary structure comprises 506 residues: Glutamate--tRNA ligase (506 aa).

The 'HIGH' region signature appears at 12–22 (PSPTGDPHVGT). The 'KMSKS' region signature appears at 253–257 (KLSKR). K256 lines the ATP pocket.

This sequence belongs to the class-I aminoacyl-tRNA synthetase family. Glutamate--tRNA ligase type 1 subfamily. As to quaternary structure, monomer.

It is found in the cytoplasm. The catalysed reaction is tRNA(Glu) + L-glutamate + ATP = L-glutamyl-tRNA(Glu) + AMP + diphosphate. Catalyzes the attachment of glutamate to tRNA(Glu) in a two-step reaction: glutamate is first activated by ATP to form Glu-AMP and then transferred to the acceptor end of tRNA(Glu). The protein is Glutamate--tRNA ligase of Chlamydia trachomatis serovar L2 (strain ATCC VR-902B / DSM 19102 / 434/Bu).